The sequence spans 20 residues: Brevinin-1DYc (20 aa).

The cysteines at positions 14 and 20 are disulfide-linked.

Expressed by the skin glands.

The protein resides in the secreted. Its function is as follows. Antimicrobial peptide. Has low activity against the Gram-positive bacterium S.aureus and the Gram-negative bacterium E.coli (MIC&lt;15 uM). Has a strong hemolytic activity. This is Brevinin-1DYc from Rana dybowskii (Dybovsky's frog).